The following is a 406-amino-acid chain: NYYTPDYETKGTDILAAFRMTPQPGVPPEEAGAAVAAESSTGTWTTVWTDGLTSLDRYKGRCYDIEPVAGEEHQFIAYVAYPLDLFEEGSVTNLFTSIVGNVFGFKALRALRLGDLRIPPSYSKTFMGPPHGIQVERDKLNKYGRPFLGCTIKPKLGLSAKNYGRAVYECLRGGLDFTKDDENVNSQPFMRWRDRFLFVAEALFKAQSETGEVKGHYLNATAGTCEEMFKRAIFARELGAPIVMHDYLTGGFTANTSLAYYCRDNGLLLHIHRAMHAVIDRQKNHGMHFRVLAKALRMSGGDHFHSGTVVGKLEGERDITLGFVDLLRDDYIDKDRSRGIYFTQDWVSMPGVLPVASGGIHVWHMPALTEIFGDDSVLQFGGGTLGHPWGNAPGAVANRVALVACV.

2 residues coordinate substrate: asparagine 101 and threonine 151. The Proton acceptor role is filled by lysine 153. A substrate-binding site is contributed by lysine 155. Positions 179, 181, and 182 each coordinate Mg(2+). Lysine 179 is subject to N6-carboxylysine. Histidine 272 (proton acceptor) is an active-site residue. The substrate site is built by arginine 273, histidine 305, and serine 357.

It belongs to the RuBisCO large chain family. Type I subfamily. As to quaternary structure, heterohexadecamer of 8 large chains and 8 small chains; disulfide-linked. The disulfide link is formed within the large subunit homodimers. The cofactor is Mg(2+). In terms of processing, the disulfide bond which can form in the large chain dimeric partners within the hexadecamer appears to be associated with oxidative stress and protein turnover.

The protein localises to the plastid. It is found in the chloroplast. The enzyme catalyses 2 (2R)-3-phosphoglycerate + 2 H(+) = D-ribulose 1,5-bisphosphate + CO2 + H2O. The catalysed reaction is D-ribulose 1,5-bisphosphate + O2 = 2-phosphoglycolate + (2R)-3-phosphoglycerate + 2 H(+). RuBisCO catalyzes two reactions: the carboxylation of D-ribulose 1,5-bisphosphate, the primary event in carbon dioxide fixation, as well as the oxidative fragmentation of the pentose substrate in the photorespiration process. Both reactions occur simultaneously and in competition at the same active site. This is Ribulose bisphosphate carboxylase large chain (rbcL) from Trichomanes striatum (Fern).